Here is a 324-residue protein sequence, read N- to C-terminus: Fructose-1,6-bisphosphatase class 1 (324 aa).

Positions 88, 107, 109, and 110 each coordinate Mg(2+). Substrate-binding positions include 110–113, asparagine 199, and lysine 265; that span reads DGSS. Mg(2+) is bound at residue glutamate 271.

Belongs to the FBPase class 1 family. As to quaternary structure, homotetramer. The cofactor is Mg(2+).

It localises to the cytoplasm. It catalyses the reaction beta-D-fructose 1,6-bisphosphate + H2O = beta-D-fructose 6-phosphate + phosphate. It participates in carbohydrate biosynthesis; gluconeogenesis. This chain is Fructose-1,6-bisphosphatase class 1, found in Neisseria meningitidis serogroup A / serotype 4A (strain DSM 15465 / Z2491).